A 442-amino-acid chain; its full sequence is Gamma-glutamyl phosphate reductase (442 aa).

Belongs to the gamma-glutamyl phosphate reductase family.

It localises to the cytoplasm. The enzyme catalyses L-glutamate 5-semialdehyde + phosphate + NADP(+) = L-glutamyl 5-phosphate + NADPH + H(+). Its pathway is amino-acid biosynthesis; L-proline biosynthesis; L-glutamate 5-semialdehyde from L-glutamate: step 2/2. Functionally, catalyzes the NADPH-dependent reduction of L-glutamate 5-phosphate into L-glutamate 5-semialdehyde and phosphate. The product spontaneously undergoes cyclization to form 1-pyrroline-5-carboxylate. This chain is Gamma-glutamyl phosphate reductase, found in Campylobacter curvus (strain 525.92).